Reading from the N-terminus, the 160-residue chain is MSEAKKYVMTYEGVKKLEEELEYLKTVKRKEITEKIKVALSFGDLSENSEYDEAKNEQAFVEGRIIQLENMLKNASIVDENEVPKDIVSVGSIVKVKDYEFDEEVEYIIVGSAEADPMNNKISNESPVGHGLIGKKVGDIIEVTVPDGVSKYEILEVNRA.

Residues Val-14 to Ser-76 are a coiled coil.

It belongs to the GreA/GreB family.

Its function is as follows. Necessary for efficient RNA polymerase transcription elongation past template-encoded arresting sites. The arresting sites in DNA have the property of trapping a certain fraction of elongating RNA polymerases that pass through, resulting in locked ternary complexes. Cleavage of the nascent transcript by cleavage factors such as GreA or GreB allows the resumption of elongation from the new 3'terminus. GreA releases sequences of 2 to 3 nucleotides. This chain is Transcription elongation factor GreA, found in Clostridium botulinum (strain Okra / Type B1).